Here is a 470-residue protein sequence, read N- to C-terminus: D-serine/D-alanine/glycine transporter (470 aa).

12 helical membrane passes run 30–50 (LIAIGGAIGTGLFMGSGKTIS), 51–71 (LAGPSIIFVYMIIGFMLFFVM), 102–122 (FTGWTYWFCWVVTGMADVVAI), 137–157 (VASLAVIVLLLTLNLATVKMF), 162–182 (FWFAMIKIVAIVSLIVVGLVM), 211–231 (LSGFFAGFQIAVFAFVGIELV), 256–276 (IIMFYVFALIVIMSVTPWSSV), 283–303 (FVELFVLVGLPAAASVINFVV), 350–370 (FSCICLLGGVVMLYVNPSVIG), 371–391 (AFTMITTVSAILFMFVWTIIL), 413–433 (PLGKLMCWVCMAFFVFVVVLL), and 441–461 (QALLVTPLWFIALGLGWLFIG).

Belongs to the amino acid-polyamine-organocation (APC) superfamily. Amino acid transporter (AAT) (TC 2.A.3.1) family.

The protein localises to the cell inner membrane. The enzyme catalyses D-alanine(in) + H(+)(in) = D-alanine(out) + H(+)(out). The catalysed reaction is D-serine(out) + H(+)(out) = D-serine(in) + H(+)(in). It catalyses the reaction glycine(in) + H(+)(in) = glycine(out) + H(+)(out). Its function is as follows. Permease that is involved in the transport across the cytoplasmic membrane of D-alanine, D-serine and glycine. The sequence is that of D-serine/D-alanine/glycine transporter (cycA) from Escherichia coli O157:H7.